Here is a 341-residue protein sequence, read N- to C-terminus: Spindolin (341 aa).

Positions 1–20 (MNKLILISLIASLYQVEVDA) are cleaved as a signal peptide.

Homodimer; disulfide-linked.

Functionally, this protein is a spindle body protein. This is Spindolin (SPH) from Choristoneura biennis entomopoxvirus (CbEPV).